The following is a 72-amino-acid chain: Translation initiation factor IF-1 (72 aa).

Positions 1–72 (MAKEDCIEME…TKGRIKFRSK (72 aa)) constitute an S1-like domain.

Belongs to the IF-1 family. Component of the 30S ribosomal translation pre-initiation complex which assembles on the 30S ribosome in the order IF-2 and IF-3, IF-1 and N-formylmethionyl-tRNA(fMet); mRNA recruitment can occur at any time during PIC assembly.

Its subcellular location is the cytoplasm. One of the essential components for the initiation of protein synthesis. Stabilizes the binding of IF-2 and IF-3 on the 30S subunit to which N-formylmethionyl-tRNA(fMet) subsequently binds. Helps modulate mRNA selection, yielding the 30S pre-initiation complex (PIC). Upon addition of the 50S ribosomal subunit IF-1, IF-2 and IF-3 are released leaving the mature 70S translation initiation complex. This is Translation initiation factor IF-1 from Francisella tularensis subsp. tularensis (strain WY96-3418).